Reading from the N-terminus, the 248-residue chain is Probable 2-oxo-3-(5-oxofuran-2-ylidene)propanoate lactonase (248 aa).

Catalysis depends on residues C123, D180, and H212.

Belongs to the dienelactone hydrolase family.

The catalysed reaction is 2-oxo-3-(5-oxofuran-2-ylidene)propanoate + H2O = 3-maleylpyruvate + H(+). Functionally, involved in the 5-nitroanthranilic acid (5NAA) degradation. Catalyzes the hydrolysis of the lactone to produce maleylpyruvate biodegradation of 5-nitroanthranilate. In Bradyrhizobium sp, this protein is Probable 2-oxo-3-(5-oxofuran-2-ylidene)propanoate lactonase (naaC).